The primary structure comprises 371 residues: 3-methyl-D-ornithine--L-lysine ligase (371 aa).

An ATP-binding site is contributed by Lys-18. 19–20 (LQ) contributes to the L-lysine binding site. ATP contacts are provided by residues Asp-39, 57 to 58 (NI), and 80 to 81 (EN). Residue Glu-80 coordinates L-lysine. One can recognise an ATP-grasp domain in the interval 93–277 (EKFSCPVLFD…LIELLFRAFN (185 aa)). ADP contacts are provided by residues Lys-112, Lys-139, Ser-146, and 168–171 (EEYV). D-ornithine contacts are provided by residues 177–179 (SLE) and Asp-233. Glu-235, Glu-247, and Asp-249 together coordinate Mg(2+). Residue Glu-247 participates in ADP binding. D-ornithine is bound by residues 251–256 (RFPSQT) and Glu-310. The L-lysine site is built by Ser-254 and Glu-310.

The protein belongs to the PylC family. The cofactor is Mg(2+).

It carries out the reaction (3R)-3-methyl-D-ornithine + L-lysine + ATP = (3R)-3-methyl-D-ornithyl-N(6)-L-lysine + ADP + phosphate + H(+). It functions in the pathway amino-acid biosynthesis; L-pyrrolysine biosynthesis. Is required for the biosynthesis of pyrrolysine. Catalyzes the ATP-dependent ligation between (3R)-3-methyl-D-ornithine and L-lysine, leading to (3R)-3-methyl-D-ornithyl-N6-L-lysine. Is also involved in the synthesis of pyrroline-carboxy-lysine (Pcl), a demethylated form of pyrrolysine that is generated by the pyrrolysine biosynthetic enzymes when the growth media is supplemented with D-ornithine. The protein is 3-methyl-D-ornithine--L-lysine ligase of Methanosarcina mazei (strain ATCC BAA-159 / DSM 3647 / Goe1 / Go1 / JCM 11833 / OCM 88) (Methanosarcina frisia).